Here is a 173-residue protein sequence, read N- to C-terminus: Regulator of ribonuclease activity A (173 aa).

It belongs to the RraA family. As to quaternary structure, homotrimer. Binds to both RNA-binding sites in the C-terminal region of Rne and to RhlB.

The protein localises to the cytoplasm. Functionally, globally modulates RNA abundance by binding to RNase E (Rne) and regulating its endonucleolytic activity. Can modulate Rne action in a substrate-dependent manner by altering the composition of the degradosome. Modulates RNA-binding and helicase activities of the degradosome. This is Regulator of ribonuclease activity A from Vibrio vulnificus (strain CMCP6).